Reading from the N-terminus, the 481-residue chain is MDAMATTEKKPHVIFIPFPAQSHIKAMLKLAQLLHHKGLQITFVNTDFIHNQFLESSGPHCLDGAPGFRFETIPDGVSHSPEASIPIRESLLRSIETNFLDRFIDLVTKLPDPPTCIISDGFLSVFTIDAAKKLGIPVMMYWTLAACGFMGFYHIHSLIEKGFAPLKDASYLTNGYLDTVIDWVPGMEGIRLKDFPLDWSTDLNDKVLMFTTEAPQRSHKVSHHIFHTFDELEPSIIKTLSLRYNHIYTIGPLQLLLDQIPEEKKQTGITSLHGYSLVKEEPECFQWLQSKEPNSVVYVNFGSTTVMSLEDMTEFGWGLANSNHYFLWIIRSNLVIGENAVLPPELEEHIKKRGFIASWCSQEKVLKHPSVGGFLTHCGWGSTIESLSAGVPMICWPYSWDQLTNCRYICKEWEVGLEMGTKVKRDEVKRLVQELMGEGGHKMRNKAKDWKEKARIAIAPNGSSSLNIDKMVKEITVLARN.

Catalysis depends on His-23, which acts as the Proton acceptor. Position 23 (His-23) interacts with an anthocyanidin. Asp-120 functions as the Charge relay in the catalytic mechanism. Positions 143, 362, 377, 380, 382, 385, 401, and 402 each coordinate UDP-alpha-D-glucose.

It belongs to the UDP-glycosyltransferase family.

The catalysed reaction is steviol + UDP-alpha-D-glucose = steviolmonoside + UDP + H(+). It carries out the reaction steviolmonoside + UDP-alpha-D-glucose = rubusoside + UDP. In terms of biological role, involved in the biosynthesis of steviol glycosides in leaves. Converts steviol to the mono-glycoside steviolmonoside. Converts the mono-glycoside steviolmonoside to the bi-glycoside rubusoside. The polypeptide is UDP-glycosyltransferase 85C2 (Stevia rebaudiana (Stevia)).